We begin with the raw amino-acid sequence, 407 residues long: Argininosuccinate synthase (407 aa).

An ATP-binding site is contributed by 8–16 (AYSGGLDTT). 2 residues coordinate L-citrulline: tyrosine 86 and serine 91. Glycine 116 contributes to the ATP binding site. Residues threonine 118, asparagine 122, and aspartate 123 each contribute to the L-aspartate site. Asparagine 122 is an L-citrulline binding site. Residues arginine 126, serine 178, serine 187, glutamate 264, and tyrosine 276 each coordinate L-citrulline.

Belongs to the argininosuccinate synthase family. Type 1 subfamily. In terms of assembly, homotetramer.

It localises to the cytoplasm. The enzyme catalyses L-citrulline + L-aspartate + ATP = 2-(N(omega)-L-arginino)succinate + AMP + diphosphate + H(+). It participates in amino-acid biosynthesis; L-arginine biosynthesis; L-arginine from L-ornithine and carbamoyl phosphate: step 2/3. The polypeptide is Argininosuccinate synthase (Lachnoclostridium phytofermentans (strain ATCC 700394 / DSM 18823 / ISDg) (Clostridium phytofermentans)).